Here is a 295-residue protein sequence, read N- to C-terminus: Lipoyl synthase (295 aa).

[4Fe-4S] cluster is bound by residues cysteine 34, cysteine 39, cysteine 45, cysteine 60, cysteine 64, cysteine 67, and serine 273. Positions 46 to 262 (WNKRHATIMI…KLMAYAKGFS (217 aa)) constitute a Radical SAM core domain.

The protein belongs to the radical SAM superfamily. Lipoyl synthase family. Requires [4Fe-4S] cluster as cofactor.

It localises to the cytoplasm. The catalysed reaction is [[Fe-S] cluster scaffold protein carrying a second [4Fe-4S](2+) cluster] + N(6)-octanoyl-L-lysyl-[protein] + 2 oxidized [2Fe-2S]-[ferredoxin] + 2 S-adenosyl-L-methionine + 4 H(+) = [[Fe-S] cluster scaffold protein] + N(6)-[(R)-dihydrolipoyl]-L-lysyl-[protein] + 4 Fe(3+) + 2 hydrogen sulfide + 2 5'-deoxyadenosine + 2 L-methionine + 2 reduced [2Fe-2S]-[ferredoxin]. It functions in the pathway protein modification; protein lipoylation via endogenous pathway; protein N(6)-(lipoyl)lysine from octanoyl-[acyl-carrier-protein]: step 2/2. Functionally, catalyzes the radical-mediated insertion of two sulfur atoms into the C-6 and C-8 positions of the octanoyl moiety bound to the lipoyl domains of lipoate-dependent enzymes, thereby converting the octanoylated domains into lipoylated derivatives. The polypeptide is Lipoyl synthase (Anaplasma marginale (strain St. Maries)).